The primary structure comprises 232 residues: MAAITALTLRSPVYLPSSATSPRFHGFTNQPPPARLFFPLNPFPSLSIQNPKSIRISASASPITTPILQTEKSTARSSTLTGSTRSLATLAALAIAVTRVLAQKLSLAIQTSSPVIADGLRFSLSTAGPVFFASLRDRPPGYLNTPLTVVAVGIKKWLDIYSGVLMVRVLLSWFPNIPWERQPLSAIRDLCDPYLNLFRNIIPPIFDTLDVSPLLAFAVLGTLGSIVHGSTG.

Residues 1 to 16 (MAAITALTLRSPVYLP) constitute a chloroplast transit peptide. 2 helical membrane passes run 147-167 (LTVVAVGIKKWLDIYSGVLMV) and 201-221 (IIPPIFDTLDVSPLLAFAVLG).

It belongs to the YggT family.

The protein localises to the plastid. The protein resides in the chloroplast thylakoid membrane. Required for the proper distribution of nucleoids in chloroplasts. The nucleoid partitioning by YLMG1-1 may be related to chloroplast division processes. This chain is YlmG homolog protein 1-1, chloroplastic, found in Arabidopsis thaliana (Mouse-ear cress).